The following is a 473-amino-acid chain: Ribulose bisphosphate carboxylase large chain 1 (473 aa).

Positions 116 and 166 each coordinate substrate. Lysine 168 (proton acceptor) is an active-site residue. Substrate is bound at residue lysine 170. Residues lysine 194, aspartate 196, and glutamate 197 each contribute to the Mg(2+) site. The residue at position 194 (lysine 194) is an N6-carboxylysine. Histidine 287 (proton acceptor) is an active-site residue. The substrate site is built by arginine 288, histidine 320, and serine 372.

This sequence belongs to the RuBisCO large chain family. Type I subfamily. In terms of assembly, heterohexadecamer of 8 large chains and 8 small chains. Mg(2+) serves as cofactor.

It catalyses the reaction 2 (2R)-3-phosphoglycerate + 2 H(+) = D-ribulose 1,5-bisphosphate + CO2 + H2O. It carries out the reaction D-ribulose 1,5-bisphosphate + O2 = 2-phosphoglycolate + (2R)-3-phosphoglycerate + 2 H(+). RuBisCO catalyzes two reactions: the carboxylation of D-ribulose 1,5-bisphosphate, the primary event in carbon dioxide fixation, as well as the oxidative fragmentation of the pentose substrate. Both reactions occur simultaneously and in competition at the same active site. In Acidithiobacillus ferrooxidans (strain ATCC 23270 / DSM 14882 / CIP 104768 / NCIMB 8455) (Ferrobacillus ferrooxidans (strain ATCC 23270)), this protein is Ribulose bisphosphate carboxylase large chain 1.